Consider the following 513-residue polypeptide: GMP synthase [glutamine-hydrolyzing] (513 aa).

The region spanning 3-192 (TVVVLDYGSQ…VSKIAKMEKN (190 aa)) is the Glutamine amidotransferase type-1 domain. The Nucleophile role is filled by Cys-80. Active-site residues include His-166 and Glu-168. In terms of domain architecture, GMPS ATP-PPase spans 193–388 (WEMKDFVSEK…LELPQSMINR (196 aa)). 220–226 (SGGVDSS) provides a ligand contact to ATP.

In terms of assembly, homodimer.

The catalysed reaction is XMP + L-glutamine + ATP + H2O = GMP + L-glutamate + AMP + diphosphate + 2 H(+). The protein operates within purine metabolism; GMP biosynthesis; GMP from XMP (L-Gln route): step 1/1. Functionally, catalyzes the synthesis of GMP from XMP. The chain is GMP synthase [glutamine-hydrolyzing] from Thermosipho melanesiensis (strain DSM 12029 / CIP 104789 / BI429).